The chain runs to 339 residues: DNA-directed RNA polymerase subunit alpha (339 aa).

The segment at 1-235 (MVIQKNWQEL…DQLQVFVNFE (235 aa)) is alpha N-terminal domain (alpha-NTD). Residues 251 to 339 (FNPALLKKVD…DLAKRFEEHY (89 aa)) form an alpha C-terminal domain (alpha-CTD) region.

It belongs to the RNA polymerase alpha chain family. In terms of assembly, homodimer. The RNAP catalytic core consists of 2 alpha, 1 beta, 1 beta' and 1 omega subunit. When a sigma factor is associated with the core the holoenzyme is formed, which can initiate transcription.

The enzyme catalyses RNA(n) + a ribonucleoside 5'-triphosphate = RNA(n+1) + diphosphate. Its function is as follows. DNA-dependent RNA polymerase catalyzes the transcription of DNA into RNA using the four ribonucleoside triphosphates as substrates. The sequence is that of DNA-directed RNA polymerase subunit alpha from Methylobacterium radiotolerans (strain ATCC 27329 / DSM 1819 / JCM 2831 / NBRC 15690 / NCIMB 10815 / 0-1).